Reading from the N-terminus, the 152-residue chain is Ribosome maturation factor RimP (152 aa).

This sequence belongs to the RimP family.

It localises to the cytoplasm. Functionally, required for maturation of 30S ribosomal subunits. The sequence is that of Ribosome maturation factor RimP from Ectopseudomonas mendocina (strain ymp) (Pseudomonas mendocina).